A 228-amino-acid polypeptide reads, in one-letter code: Cytidylate kinase (228 aa).

17 to 25 provides a ligand contact to ATP; sequence GPTASGKGT.

Belongs to the cytidylate kinase family. Type 1 subfamily.

It localises to the cytoplasm. It catalyses the reaction CMP + ATP = CDP + ADP. It carries out the reaction dCMP + ATP = dCDP + ADP. This is Cytidylate kinase from Burkholderia pseudomallei (strain 1106a).